The sequence spans 238 residues: 7-cyano-7-deazaguanine synthase (238 aa).

14–24 contacts ATP; the sequence is FSGGQDSTTCL. Residues C195, C204, C207, and C210 each contribute to the Zn(2+) site.

This sequence belongs to the QueC family. Zn(2+) is required as a cofactor.

The catalysed reaction is 7-carboxy-7-deazaguanine + NH4(+) + ATP = 7-cyano-7-deazaguanine + ADP + phosphate + H2O + H(+). The protein operates within purine metabolism; 7-cyano-7-deazaguanine biosynthesis. Functionally, catalyzes the ATP-dependent conversion of 7-carboxy-7-deazaguanine (CDG) to 7-cyano-7-deazaguanine (preQ(0)). The chain is 7-cyano-7-deazaguanine synthase from Baumannia cicadellinicola subsp. Homalodisca coagulata.